The primary structure comprises 260 residues: HTH-type transcriptional repressor NanR (260 aa).

The region spanning 27 to 95 (KKLSDMVEEE…NGERARVSMP (69 aa)) is the HTH gntR-type domain. The H-T-H motif DNA-binding region spans 55-74 (ERELMEFFNVGRPSVREALA).

This sequence belongs to the NanR family.

Its function is as follows. Transcriptional repressor that controls expression of the genes required for the catabolism of sialic acids. This chain is HTH-type transcriptional repressor NanR, found in Enterobacter sp. (strain 638).